A 142-amino-acid chain; its full sequence is Large ribosomal subunit protein uL11 (142 aa).

Belongs to the universal ribosomal protein uL11 family. As to quaternary structure, part of the ribosomal stalk of the 50S ribosomal subunit. Interacts with L10 and the large rRNA to form the base of the stalk. L10 forms an elongated spine to which L12 dimers bind in a sequential fashion forming a multimeric L10(L12)X complex. Post-translationally, one or more lysine residues are methylated.

Forms part of the ribosomal stalk which helps the ribosome interact with GTP-bound translation factors. This chain is Large ribosomal subunit protein uL11, found in Shewanella sp. (strain W3-18-1).